The primary structure comprises 239 residues: Ras-like protein B (239 aa).

GTP is bound by residues 13–18 (GVGKTA), 29–35 (VETYDPT), 59–60 (AG), 139–142 (NKSD), and 169–171 (SAK). Residues 32–40 (YDPTIEDSY) carry the Effector region motif. The interval 191–227 (RQQQQGGRAQDRRPTGLGPMRDRDAGPEYPKTFRPDR) is disordered. Over residues 199–226 (AQDRRPTGLGPMRDRDAGPEYPKTFRPD) the composition is skewed to basic and acidic residues.

It belongs to the small GTPase superfamily. Ras family. In terms of assembly, interacts with mpkA.

It catalyses the reaction GTP + H2O = GDP + phosphate + H(+). Its function is as follows. Ras-like protein involved in the activation of Ras protein signal transduction. Ras proteins bind GDP/GTP and possess intrinsic GTPase activity. Plays a role in hyphal morphology and conidiophore development. Required for full virulence. The sequence is that of Ras-like protein B from Aspergillus fumigatus (strain ATCC MYA-4609 / CBS 101355 / FGSC A1100 / Af293) (Neosartorya fumigata).